The primary structure comprises 324 residues: Thiamine thiazole synthase (324 aa).

Substrate contacts are provided by residues Cys-86, 107–108 (EA), Gly-115, and Val-180. Cys-213 carries the 2,3-didehydroalanine (Cys) modification. Residues Asp-215, His-230, Met-282, and 292–294 (RMG) contribute to the substrate site.

Belongs to the THI4 family. In terms of assembly, homooctamer. Fe cation serves as cofactor. In terms of processing, during the catalytic reaction, a sulfide is transferred from Cys-213 to a reaction intermediate, generating a dehydroalanine residue.

Its subcellular location is the cytoplasm. It localises to the nucleus. The enzyme catalyses [ADP-thiazole synthase]-L-cysteine + glycine + NAD(+) = [ADP-thiazole synthase]-dehydroalanine + ADP-5-ethyl-4-methylthiazole-2-carboxylate + nicotinamide + 3 H2O + 2 H(+). Its function is as follows. Involved in biosynthesis of the thiamine precursor thiazole. Catalyzes the conversion of NAD and glycine to adenosine diphosphate 5-(2-hydroxyethyl)-4-methylthiazole-2-carboxylic acid (ADT), an adenylated thiazole intermediate. The reaction includes an iron-dependent sulfide transfer from a conserved cysteine residue of the protein to a thiazole intermediate. The enzyme can only undergo a single turnover, which suggests it is a suicide enzyme. May have additional roles in adaptation to various stress conditions and in DNA damage tolerance. The sequence is that of Thiamine thiazole synthase (sti35) from Fusarium solani subsp. phaseoli (Nectria haematococca).